A 213-amino-acid polypeptide reads, in one-letter code: Uridine kinase (213 aa).

15–22 (GASASGKS) is a binding site for ATP.

The protein belongs to the uridine kinase family.

It is found in the cytoplasm. The enzyme catalyses uridine + ATP = UMP + ADP + H(+). It catalyses the reaction cytidine + ATP = CMP + ADP + H(+). The protein operates within pyrimidine metabolism; CTP biosynthesis via salvage pathway; CTP from cytidine: step 1/3. It functions in the pathway pyrimidine metabolism; UMP biosynthesis via salvage pathway; UMP from uridine: step 1/1. The protein is Uridine kinase of Serratia proteamaculans (strain 568).